The chain runs to 215 residues: Cytochrome b6 (215 aa).

A helical transmembrane segment spans residues 32-52 (IFYCFGGLVLTCFLIQVATGF). Cysteine 35 lines the heme c pocket. Heme b-binding residues include histidine 86 and histidine 100. 3 helical membrane passes run 90–110 (ASMM…TGGF), 116–136 (LTWV…VTGY), and 186–206 (AHTF…FLMI). 2 residues coordinate heme b: histidine 187 and histidine 202.

Belongs to the cytochrome b family. PetB subfamily. In terms of assembly, the 4 large subunits of the cytochrome b6-f complex are cytochrome b6, subunit IV (17 kDa polypeptide, PetD), cytochrome f and the Rieske protein, while the 4 small subunits are PetG, PetL, PetM and PetN. The complex functions as a dimer. The cofactor is heme b. Requires heme c as cofactor.

The protein resides in the plastid. Its subcellular location is the chloroplast thylakoid membrane. Component of the cytochrome b6-f complex, which mediates electron transfer between photosystem II (PSII) and photosystem I (PSI), cyclic electron flow around PSI, and state transitions. The sequence is that of Cytochrome b6 from Phaeodactylum tricornutum (strain CCAP 1055/1).